The following is a 655-amino-acid chain: p-hydroxybenzoic acid efflux pump subunit AaeB (655 aa).

Residues 1–12 (MGIFSIANQHIR) lie on the Periplasmic side of the membrane. The chain crosses the membrane as a helical span at residues 13–33 (FAVKLACAIVLALFIGFHFQL). Residues 34–37 (ETPR) lie on the Cytoplasmic side of the membrane. Residues 38–58 (WAVLTAAIVAAGPAFAAGGEP) form a helical membrane-spanning segment. Over 59–68 (YSGAIRYRGM) the chain is Periplasmic. The helical transmembrane segment at 69-89 (LRIIGTFIGCIAALIIIISMI) threads the bilayer. The Cytoplasmic segment spans residues 90-92 (RAP). The chain crosses the membrane as a helical span at residues 93–113 (LLMILVCCVWVGFCTWISSLV). At 114–120 (RIENSYA) the chain is on the periplasmic side. Residues 121–141 (WGLSGYTALIIVITIQTEPLL) form a helical membrane-spanning segment. At 142–151 (TPQFALERCS) the chain is on the cytoplasmic side. Residues 152–172 (EIVIGIGCAILADLLFSPRSI) form a helical membrane-spanning segment. The Periplasmic portion of the chain corresponds to 173-369 (KQEVDRELDS…RTTLSCILGT (197 aa)). A helical transmembrane segment spans residues 370–390 (LFWLWTGWTSGNGEMVMIAVV). At 391–406 (TSLAMRLPNPRMVCID) the chain is on the cytoplasmic side. A helical membrane pass occupies residues 407-427 (FIYGTLAALPLGLLYFLVIIP). The Periplasmic portion of the chain corresponds to 428–430 (NTQ). The helical transmembrane segment at 431-451 (QSMLLLCLSLAVLGFFIGIEV) threads the bilayer. Over 452–458 (QKRRLGS) the chain is Cytoplasmic. Residues 459-479 (MGALASTINIIVLDNPMTFHF) form a helical membrane-spanning segment. Residues 480 to 481 (SQ) are Periplasmic-facing. Residues 482-502 (FLDSALGQIVGCMLAFIVILL) form a helical membrane-spanning segment. The Cytoplasmic portion of the chain corresponds to 503 to 655 (VRDKSKDRTG…HKYQNALTDS (153 aa)).

The protein belongs to the aromatic acid exporter ArAE (TC 2.A.85) family.

It localises to the cell inner membrane. Functionally, forms an efflux pump with AaeA. Could function as a metabolic relief valve, allowing to eliminate certain compounds when they accumulate to high levels in the cell. The chain is p-hydroxybenzoic acid efflux pump subunit AaeB from Salmonella paratyphi A (strain ATCC 9150 / SARB42).